A 671-amino-acid chain; its full sequence is Nucleolar GTP-binding protein 1 (671 aa).

The region spanning 169 to 350 (RTVLICGYPN…VKNAACERLL (182 aa)) is the OBG-type G domain. Residues 175–182 (GYPNVGKS), 221–225 (DTPGI), and 289–292 (NKTD) contribute to the GTP site. The disordered stretch occupies residues 516–671 (VAQNRSTVPR…KRGKGKTDRR (156 aa)). Positions 595-605 (RAMSISRSQSR) are enriched in polar residues. 2 stretches are compositionally biased toward basic residues: residues 631–640 (NKSHKKRDKN) and 654–671 (RPKH…TDRR).

Belongs to the TRAFAC class OBG-HflX-like GTPase superfamily. OBG GTPase family. NOG subfamily.

It localises to the nucleus. It is found in the nucleolus. Involved in the biogenesis of the 60S ribosomal subunit. This is Nucleolar GTP-binding protein 1 from Arabidopsis thaliana (Mouse-ear cress).